The primary structure comprises 353 residues: Transcription termination/antitermination protein NusG (353 aa).

Residues 301–335 (VGDMVKIISGPFEDFAGVIKEIDPERQELKVNVTI) enclose the KOW domain.

Belongs to the NusG family.

Regulated by autoinhibition via interaction of the N-terminal and the C-terminal domains. Autoinhibition may prevent NusG from interacting prematurely with other components of the transcription complex or non-specific interactions with other cellular components. Its function is as follows. Participates in transcription elongation, termination and antitermination. The polypeptide is Transcription termination/antitermination protein NusG (Thermotoga maritima (strain ATCC 43589 / DSM 3109 / JCM 10099 / NBRC 100826 / MSB8)).